Consider the following 2410-residue polypeptide: MEQTLAQAVSRKSKTDTPMAEERKHFSPMNFSANFVAPELFYSANVRKIKNIFRERSTTRFLDAISSDFELVAFLTLSPAHLMQLETVLRHEMRSCVVPIVTSDASFETVAVIKTALDGMRFHFGYTTLEKGWISMMRHAESCLQESSSSAVNDLQTQIKRVGSLLLSGKNRVEGCELSVLNLTARRFRIEYGLNGTYFGEHVAMLRGLKRYIYGTVPKEFLWAKTKKHSLFTIPAWIKRTPIDCFLFCLRVIPILHRCGVAVSLIYWSCAAALNFPAFMSFLFKRQFAKYLAHSFAKHSIYFMFLTIVAILWSFRTFTSQKPKIVLQARSTAEKEKKLMMILASVVGITYLFDYDIAEALGNCLHKISRLSSYLLDDHQGIASRMFGASYGLQAGDSAEDAVTTIISDLLSVTFKIVDEDASQGTVEDASETTFHSWVGVNTLAGRNMSRPLQYSVNETYALTPQNVQLQARKMADANNCWSMVVGHTGSGKSTYLPVQYSNYLSTKSDRRQQILICEPTQAATENVCAGVAANLGRAVYGRHEGWSRMGDHCIQVMTYGSALQCHAMDPSFISTFDAIFLDEAHDVKEHSLVFESICDTFKSVRKFYVSATPRDGSVCPEAARKYPLHVETSVCDSYRKFIAAQGGGDLLDISKHDTALVFLAGRPECIKAANAWNASVTGEKRAFSLSSDNFATDFSMLTERLKTHKTIIFTTNIIETGVTLSVDCVVDFGHTMRPCLDLNQKALRLDRRRVTRNERQQRIGRAGRLKDGYAIVCGDVDRAVNVISPDVLYGAALLSFKHNVPFYMNETFESSWLEGITKAQADTMTIFKLPIFLTRDLINADGSVAKEFLDVLKKHQFTTSDIKQAPSVTAKHIFPTWASYFSLHQALHYGDDKDEVPHELRYARVPFSVTTLSKFDWPALALACEKHRASMSNVFAGIEEPARVVTLQTNPANIQASITHLTHMSKNYKTLIENNQHVRQSMVTNVMYKWFSSTRITKDLDRNLRRCTDNLAVVEATLSSLRQILAGNTQVHATPHMQSTLEDIIGLQASDTLTEESLASALGIFVPKSNLFLLLATKGFKLVYVVCILLLVNLVYLGLRKWREHLKQKGSNEILTNTMPVSEGGEILAEVMKMEPKMRKNIKKDMDAAVESKLCGFTFVFPDDDKIGLEGKGNKYRPREDARLMYSTREDATLDAWNEKAKERRKKVTDKSEPELRRAYEKRPYFNFYDLQTDSNILEAIFYTTEGDEFFRTADPNKDMNLVADKLRSFLDTKLVVGHHQRQMLEETAKVVIKDTKGTAHHMDISQHDPDHLKQNGSGKIGYPEHRGQFRQEGPAKTADYDLGVEFGTDTDDITLEASTGILLSQVGVDVATRVGRIFIGTFNMNCYFYSDWILVPGHLQDRSGNVTIQFPDQTVQTTTDALNANGVKRFYGLDVIAIRRPAILRPRTKLVKAFAIEEPVIAQMVFVDAQGVRKFTQSVRARKEENSGRWSHKISTVLGMCGCQFWTLERQIDGIHVATNYTKKRNEFQPFTQEVVDFINGPGTKIPYCPWVFDRPACGYASHTALFEKPTTLTDIIHMQASDGLHNINNAIEGFGSSLRGQLVSPPTESTRQRFDKLFGSGSFELIGQMNKGLIDKHVIVGENDDVHDFMREHPTFTWLKDFMNEYAPSVLSYSAYYKDLCKYNRAKHVLTYNPEELHYATKGLIKMLEDAGLTQGSVRTPQQVISDIQWNTSAGPSYQGKKRDLCAHLSDDEVLHLAEVCRQQFLEGKSTGVWNGSLKAELRTIEKVEAEKTRVFTASPITSLFAMKFYVDDFNKKFYATNLKAPHTVGINKFGRGWEKLHDKLNRPGWLHGSGDGSRFDSSIDPLFFDVVKTIRKHFLPSEHHKAIDLIYDEILNTTICLANGMVIKKNVGTQRQPSTVVDNTLVLMTAFLYAYIHKTGDRELALLNERFIFVCNGDDNKFAISPQFDEEFGHDFSPELVELGLTYEFDDITSDICENPYMSLTMVKTPFGVGFSLPVERIIAIMQWSKKGGVLHSYLAGISAIYESFNTPKLFKSIYAYLLWLTEEHEAEILAAMTQSSTALPIPSMLDVYRLHYGDDEIWLQAADPLTDAQKEDARIAAADGARFELADADRRRKVEADRVEAARVKKAADAALKPVNLTATRTPTEDDGKLKTPSGARIPSSAADGNWSVPATKQVNAGLTLKIPLNKLKSVPKSVMEHNNSVALESELKAWTDAVRTSLGITTDEAWIDALIPFIGWCCNNGTSDKHAENQVMQIDSGKGAVTEMSLSPFIVHARMNGGLRRIMRNYSDETVLLITNNKLVAHWSMKHGASANAKYAFDFFVPRSWMNPQDIEVSKQARLAALGTGTYNTMLTSDTTNLRKTTNHRVLDSDGHPELT.

The interval 1 to 22 (MEQTLAQAVSRKSKTDTPMAEE) is disordered. One can recognise a Helicase ATP-binding domain in the interval 474–632 (KMADANNCWS…AARKYPLHVE (159 aa)). 487-494 (GHTGSGKS) is a binding site for ATP. The 167-residue stretch at 647-813 (GGGDLLDISK…NVPFYMNETF (167 aa)) folds into the Helicase C-terminal domain. O-(5'-phospho-RNA)-tyrosine is present on tyrosine 1234. Residues 1359 to 1573 (ITLEASTGIL…CGYASHTALF (215 aa)) enclose the Peptidase C4 domain. Active-site for nuclear inclusion protein A activity residues include histidine 1404, aspartate 1440, and cysteine 1507. A RdRp catalytic domain is found at 1857 to 1980 (WLHGSGDGSR…AISPQFDEEF (124 aa)). The tract at residues 2173-2200 (TRTPTEDDGKLKTPSGARIPSSAADGNW) is disordered.

The protein belongs to the bymoviruses polyprotein 1 family. VPg is uridylylated by the polymerase and is covalently attached to the 5'-end of the genomic RNA. This uridylylated form acts as a nucleotide-peptide primer for the polymerase. In terms of processing, the viral RNA1 of bymoviruses is expressed as a single polyprotein which undergoes post-translational proteolytic processing by the main proteinase NIa-pro resulting in the production of at least eight individual proteins.

It localises to the host cytoplasmic vesicle. It is found in the virion. It catalyses the reaction RNA(n) + a ribonucleoside 5'-triphosphate = RNA(n+1) + diphosphate. The catalysed reaction is Hydrolyzes glutaminyl bonds, and activity is further restricted by preferences for the amino acids in P6 - P1' that vary with the species of potyvirus, e.g. Glu-Xaa-Xaa-Tyr-Xaa-Gln-|-(Ser or Gly) for the enzyme from tobacco etch virus. The natural substrate is the viral polyprotein, but other proteins and oligopeptides containing the appropriate consensus sequence are also cleaved.. Its function is as follows. Indispensable for virus replication. Functionally, mediates the cap-independent, EIF4E-dependent translation of viral genomic RNAs. Binds to the cap-binding site of host EIF4E and thus interferes with the host EIF4E-dependent mRNA export and translation. VPg-RNA directly binds EIF4E and is a template for transcription. Also forms trimeric complexes with EIF4E-EIF4G, which are templates for translation. Has RNA-binding and proteolytic activities. In terms of biological role, an RNA-dependent RNA polymerase that plays an essential role in the virus replication. The chain is Genome polyprotein 1 from Hordeum vulgare (Barley).